Here is a 491-residue protein sequence, read N- to C-terminus: Alpha-2-antiplasmin (491 aa).

The signal sequence occupies residues 1 to 27 (MALLRGLLVLSLSCLQGPCFTFSPVSA). Positions 28–39 (VDLPGQQPVSEQ) are excised as a propeptide. A disulfide bridge connects residues cysteine 70 and cysteine 143. Asparagine 126, asparagine 295, asparagine 309, and asparagine 316 each carry an N-linked (GlcNAc...) asparagine glycan. The interval 439 to 491 (SALPQLQEQRDSPDNRLIGQNDKADFHGGKTFGPDLKLAPRMEEDYPQFSSPK) is disordered. A Sulfotyrosine modification is found at tyrosine 484.

The protein belongs to the serpin family. Forms protease inhibiting heterodimer with TMPRSS7. Post-translationally, proteolytically cleaved at Pro-35 by both the prolyl endopeptidase FAP form and antiplasmin-cleaving enzyme FAP soluble form to generate mature alpha-2-antiplasmin. Expressed by the liver and secreted in plasma.

It is found in the secreted. Serine protease inhibitor. The major targets of this inhibitor are plasmin and trypsin, but it also inactivates matriptase-3/TMPRSS7 and chymotrypsin. The chain is Alpha-2-antiplasmin (Serpinf2) from Mus musculus (Mouse).